A 1183-amino-acid chain; its full sequence is Putative ATP-dependent RNA helicase PB1A10.06c (1183 aa).

Disordered regions lie at residues 1–92 (MGRL…KKRL) and 165–315 (ETTT…RASR). Positions 60 to 81 (VPKEERQKRKQELKDQLLKENE) are enriched in basic and acidic residues. Composition is skewed to low complexity over residues 165–176 (ETTTTKSSTAET) and 184–196 (TRSG…STGT). Over residues 224–251 (EDPEYDSAEEDYLSTDSEEFSEDSDNSS) the composition is skewed to acidic residues. Residues 252–270 (EENKDTNEPSTKDAEKTVP) are compositionally biased toward basic and acidic residues. Residues 292–308 (ENEDFDLETSEDDSSDD) show a composition bias toward acidic residues. The Helicase ATP-binding domain maps to 408–585 (MEQIFANDVV…KLLFSVPPPI (178 aa)). Residue 421–428 (GATGSGKT) coordinates ATP. The short motif at 522 to 525 (DEAH) is the DEAH box element. A Helicase C-terminal domain is found at 611-831 (AFDKVCLIHK…SIVLQMKNMN (221 aa)). A compositionally biased stretch (acidic residues) spans 673-683 (EDLQSETEDID). Residues 673–696 (EDLQSETEDIDQVPTSSSSSVTYD) form a disordered region.

This sequence belongs to the DEAD box helicase family. DEAH subfamily.

The protein localises to the nucleus. Its subcellular location is the nucleolus. The enzyme catalyses ATP + H2O = ADP + phosphate + H(+). This Schizosaccharomyces pombe (strain 972 / ATCC 24843) (Fission yeast) protein is Putative ATP-dependent RNA helicase PB1A10.06c.